Here is a 193-residue protein sequence, read N- to C-terminus: Adenylate kinase (193 aa).

10-15 serves as a coordination point for ATP; sequence GAGKGT. The tract at residues 30-59 is NMP; that stretch reads STGDMLRAAVKAGTPIGLKAKAVMDAGGLV. AMP-binding positions include Thr-31, Arg-36, 57-59, 85-88, and Gln-92; these read GLV and GFPR. Residues 126 to 142 are LID; that stretch reads KRAKETLAAGGTVRADD. Arg-127 is a binding site for ATP. Residues Arg-139 and Arg-150 each contribute to the AMP site. Ala-178 is an ATP binding site.

This sequence belongs to the adenylate kinase family. In terms of assembly, monomer.

It localises to the cytoplasm. The catalysed reaction is AMP + ATP = 2 ADP. It participates in purine metabolism; AMP biosynthesis via salvage pathway; AMP from ADP: step 1/1. In terms of biological role, catalyzes the reversible transfer of the terminal phosphate group between ATP and AMP. Plays an important role in cellular energy homeostasis and in adenine nucleotide metabolism. This Beijerinckia indica subsp. indica (strain ATCC 9039 / DSM 1715 / NCIMB 8712) protein is Adenylate kinase.